A 252-amino-acid chain; its full sequence is MAGHSKFKNIQHRKGAQDKKRAKVFTKLIREIVTAVKTGSSNIPENNPRLRNALTAARSQNLPKERIDKAINSADDANTENYTEIRYEGYAPNGIAIIVEALTDNKNRTAAEVRSGFTKYGGSLGETGSVNYLFKHCGVIQYPTNIASNEDIFEAAIEAGGDDIVSDEIFHTIYTDIENFSKVLEFLTGKYGIPEDSYIGWIPLNTIIIDDKEKAEKLLKLVEILEESDDVQRVFGNYELSDDVYEIIQGEE.

The disordered stretch occupies residues 1–21 (MAGHSKFKNIQHRKGAQDKKR).

Belongs to the TACO1 family.

The protein resides in the cytoplasm. The polypeptide is Probable transcriptional regulatory protein RF_0799 (Rickettsia felis (strain ATCC VR-1525 / URRWXCal2) (Rickettsia azadi)).